A 146-amino-acid polypeptide reads, in one-letter code: Ribosomal RNA large subunit methyltransferase H (146 aa).

S-adenosyl-L-methionine-binding positions include Leu62, Gly94, and 113–118 (LGELTL).

This sequence belongs to the RNA methyltransferase RlmH family. In terms of assembly, homodimer.

It localises to the cytoplasm. It catalyses the reaction pseudouridine(1915) in 23S rRNA + S-adenosyl-L-methionine = N(3)-methylpseudouridine(1915) in 23S rRNA + S-adenosyl-L-homocysteine + H(+). Specifically methylates the pseudouridine at position 1915 (m3Psi1915) in 23S rRNA. The protein is Ribosomal RNA large subunit methyltransferase H of Deinococcus radiodurans (strain ATCC 13939 / DSM 20539 / JCM 16871 / CCUG 27074 / LMG 4051 / NBRC 15346 / NCIMB 9279 / VKM B-1422 / R1).